A 73-amino-acid polypeptide reads, in one-letter code: Translation initiation factor IF-1 (73 aa).

The 72-residue stretch at 1–72 (MAKEDVIEVE…TKGRITYRFI (72 aa)) folds into the S1-like domain.

It belongs to the IF-1 family. Component of the 30S ribosomal translation pre-initiation complex which assembles on the 30S ribosome in the order IF-2 and IF-3, IF-1 and N-formylmethionyl-tRNA(fMet); mRNA recruitment can occur at any time during PIC assembly.

The protein resides in the cytoplasm. Its function is as follows. One of the essential components for the initiation of protein synthesis. Stabilizes the binding of IF-2 and IF-3 on the 30S subunit to which N-formylmethionyl-tRNA(fMet) subsequently binds. Helps modulate mRNA selection, yielding the 30S pre-initiation complex (PIC). Upon addition of the 50S ribosomal subunit IF-1, IF-2 and IF-3 are released leaving the mature 70S translation initiation complex. In Lactobacillus johnsonii (strain CNCM I-12250 / La1 / NCC 533), this protein is Translation initiation factor IF-1.